Reading from the N-terminus, the 218-residue chain is NADH-ubiquinone oxidoreductase 21 kDa subunit, mitochondrial (218 aa).

The transit peptide at 1–33 (MSALRITTASAARMLRTSNAMMPSVMGAAQRRA) directs the protein to the mitochondrion. Residues 31–74 (RRALSDSAEPARVPSVESARVPEKLAKEDSPLATPKRNSPDYNV) form a disordered region. The segment covering 50 to 60 (RVPEKLAKEDS) has biased composition (basic and acidic residues).

It belongs to the complex I NDUFS4 subunit family. In terms of assembly, complex I is composed of about 40 different subunits. This is a component of the iron-sulfur (IP) fragment of the enzyme.

The protein resides in the mitochondrion inner membrane. Accessory subunit of the mitochondrial membrane respiratory chain NADH dehydrogenase (Complex I), that is believed not to be involved in catalysis. Complex I functions in the transfer of electrons from NADH to the respiratory chain. The immediate electron acceptor for the enzyme is believed to be ubiquinone. This is NADH-ubiquinone oxidoreductase 21 kDa subunit, mitochondrial (nuo-21) from Neurospora crassa (strain ATCC 24698 / 74-OR23-1A / CBS 708.71 / DSM 1257 / FGSC 987).